A 712-amino-acid polypeptide reads, in one-letter code: MFNFFAAAPKGFEYSLASELKEFGATDVKESVAGVYFSASLELAYRITLWTRLASRIVLVIYKGACDSAEQLYNAAYCIDWPSHFSHKKTFSIDFHGTGGFINNTQFGALKIKDAVVDRFRDDGTPRPDVERVNPDFKIDAHYRNGQLTISMNFSGASLHQRGYRSTTGEAPLKENLAANMLVRSGWQANPITVLDPFCGSGTVLIEAALMAADIAPGLKREKFGFENWQSHNKAMWQVIFDEAQARATLGKTRCKLKFYGSDIEPHLISIAKRNAENAGVAELIEFSVSDALDVTPPVSEGFLISNPPYGERLGNVTELLQLYYQLGDKFKKEFGGWKIAMLCSDVELISSLKLKADKQMKMFNGALECAFNIYTLHANSTRRDVPELPEGVDIIDIAPAFANRIKKNVKQFEKWAKKERIDSYRLYDADLPEYNVAIDRYVDYVVIQEYSAPATIPEAVTKRRISDVLLALPGALGIHPDRITLKTRERQKGANQYQKIDERKVEVITEEYGAKFKLNLTGYLDTGLFLDHRVTRKLVGDKAKGKNVLNLFAYTGSASVHAAIGGAKSVTTIDMSNTYINWAKENFALNGLSGAKYDFIQADCLQWIKDNSHQKYELIFIDPPTFSNSKRMEDSWDVQRDHAEMLGGLIKLLSPNGELIFSNNKRKFKMDIEALNQAGIDVTNIDHLCLPLDYKRNPHIHNVWLLTHAKK.

The THUMP domain maps to 43-154 (LAYRITLWTR…NGQLTISMNF (112 aa)).

The protein belongs to the methyltransferase superfamily. RlmKL family.

The protein resides in the cytoplasm. It catalyses the reaction guanosine(2445) in 23S rRNA + S-adenosyl-L-methionine = N(2)-methylguanosine(2445) in 23S rRNA + S-adenosyl-L-homocysteine + H(+). The enzyme catalyses guanosine(2069) in 23S rRNA + S-adenosyl-L-methionine = N(2)-methylguanosine(2069) in 23S rRNA + S-adenosyl-L-homocysteine + H(+). In terms of biological role, specifically methylates the guanine in position 2445 (m2G2445) and the guanine in position 2069 (m7G2069) of 23S rRNA. In Shewanella frigidimarina (strain NCIMB 400), this protein is Ribosomal RNA large subunit methyltransferase K/L.